An 819-amino-acid chain; its full sequence is Lon protease (819 aa).

Residues 1-36 are disordered; sequence MDSTTNSDSPILDPNPEDVEKLLDESEEESEDQSTE. Residues 43–240 form the Lon N-terminal domain; sequence LFILPLNKRP…KALILLKKEL (198 aa). 393–400 contributes to the ATP binding site; that stretch reads GPPGVGKT. One can recognise a Lon proteolytic domain in the interval 635-817; that stretch reads STPVGVATGL…DDVLKVAFPK (183 aa). Catalysis depends on residues S723 and K766.

It belongs to the peptidase S16 family. As to quaternary structure, homohexamer. Organized in a ring with a central cavity.

It is found in the cytoplasm. The enzyme catalyses Hydrolysis of proteins in presence of ATP.. Its function is as follows. ATP-dependent serine protease that mediates the selective degradation of mutant and abnormal proteins as well as certain short-lived regulatory proteins. Required for cellular homeostasis and for survival from DNA damage and developmental changes induced by stress. Degrades polypeptides processively to yield small peptide fragments that are 5 to 10 amino acids long. Binds to DNA in a double-stranded, site-specific manner. This is Lon protease from Chlamydia pneumoniae (Chlamydophila pneumoniae).